We begin with the raw amino-acid sequence, 283 residues long: uncharacterized protein (283 aa).

Positions 1–10 (MELNKTSESL) are enriched in polar residues. Disordered regions lie at residues 1–99 (MELN…NPTS) and 255–283 (DQEGDQEGEGRQDQHQGQHQEKKVEEAHI). 3 stretches are compositionally biased toward basic and acidic residues: residues 14–34 (KIDHNHPRTEAHEPRDQREVR), 42–53 (SSTRQEKADRMP), and 61–71 (ESSKGSEEGAV).

The protein belongs to the chlamydial CPn_0705/CT_671/TC_0042 family.

This is an uncharacterized protein from Chlamydia trachomatis serovar D (strain ATCC VR-885 / DSM 19411 / UW-3/Cx).